The primary structure comprises 127 residues: Profilin (127 aa).

It belongs to the profilin family. In terms of assembly, occurs in many kinds of cells as a complex with monomeric actin in a 1:1 ratio.

Its subcellular location is the cytoplasm. The protein localises to the cytoskeleton. In terms of biological role, binds to actin and affects the structure of the cytoskeleton. At high concentrations, profilin prevents the polymerization of actin, whereas it enhances it at low concentrations. By binding to PIP2, it inhibits the formation of IP3 and DG. In S.pombe, it is essential for cytokinesis. This Schizosaccharomyces pombe (strain 972 / ATCC 24843) (Fission yeast) protein is Profilin (cdc3).